Consider the following 435-residue polypeptide: uncharacterized protein (435 aa).

Belongs to the herpesviridae UL49 family.

This is an uncharacterized protein from Saimiriine herpesvirus 2 (strain 11) (SaHV-2).